The chain runs to 450 residues: Glucose-6-phosphate isomerase (450 aa).

Position 38 is a phosphothreonine (T38). The active-site Proton donor is E290. Catalysis depends on residues H311 and K425.

This sequence belongs to the GPI family.

Its subcellular location is the cytoplasm. The enzyme catalyses alpha-D-glucose 6-phosphate = beta-D-fructose 6-phosphate. It functions in the pathway carbohydrate biosynthesis; gluconeogenesis. It participates in carbohydrate degradation; glycolysis; D-glyceraldehyde 3-phosphate and glycerone phosphate from D-glucose: step 2/4. Catalyzes the reversible isomerization of glucose-6-phosphate to fructose-6-phosphate. The protein is Glucose-6-phosphate isomerase of Bacillus subtilis (strain 168).